We begin with the raw amino-acid sequence, 130 residues long: Small ribosomal subunit protein uS8 (130 aa).

It belongs to the universal ribosomal protein uS8 family. As to quaternary structure, part of the 30S ribosomal subunit. Contacts proteins S5 and S12.

In terms of biological role, one of the primary rRNA binding proteins, it binds directly to 16S rRNA central domain where it helps coordinate assembly of the platform of the 30S subunit. This chain is Small ribosomal subunit protein uS8, found in Yersinia pseudotuberculosis serotype O:1b (strain IP 31758).